The chain runs to 457 residues: Multidrug resistance protein MdtK (457 aa).

12 helical membrane passes run 11–31, 53–73, 93–113, 127–147, 160–180, 189–209, 243–263, 276–296, 314–334, 357–377, 387–407, and 418–438; these read LLALAIPVIIAQVAQTSMGFV, IWLPAILFGHGLLLALTPVIA, WLAGFVSILIMVVLWNAGYII, AVGYLRALLWGAPGYLFFQVA, GMVMGFIGLLVNIPVNYIFIY, GGVGCGVATAAVYWVMFFSMI, LPIALALFFEVTLFAVVALLV, IALNFSSLMFVLPMSLAAAVT, AARTGLGVGVCMAFCTALFTV, LMLLAAIYQLSDSIQVIGSGI, IFFITFTAYWVLGLPTGYILA, and PAGFWMGFIIGLTSAAILMML.

This sequence belongs to the multi antimicrobial extrusion (MATE) (TC 2.A.66.1) family. MdtK subfamily.

The protein localises to the cell inner membrane. Functionally, multidrug efflux pump that functions probably as a Na(+)/drug antiporter. The protein is Multidrug resistance protein MdtK of Enterobacter sp. (strain 638).